A 314-amino-acid chain; its full sequence is tRNA-cytidine(32) 2-sulfurtransferase (314 aa).

Residues 49–54 carry the PP-loop motif motif; sequence SGGKDS. [4Fe-4S] cluster contacts are provided by C124, C127, and C215.

The protein belongs to the TtcA family. In terms of assembly, homodimer. Requires Mg(2+) as cofactor. It depends on [4Fe-4S] cluster as a cofactor.

It is found in the cytoplasm. The enzyme catalyses cytidine(32) in tRNA + S-sulfanyl-L-cysteinyl-[cysteine desulfurase] + AH2 + ATP = 2-thiocytidine(32) in tRNA + L-cysteinyl-[cysteine desulfurase] + A + AMP + diphosphate + H(+). It functions in the pathway tRNA modification. In terms of biological role, catalyzes the ATP-dependent 2-thiolation of cytidine in position 32 of tRNA, to form 2-thiocytidine (s(2)C32). The sulfur atoms are provided by the cysteine/cysteine desulfurase (IscS) system. The protein is tRNA-cytidine(32) 2-sulfurtransferase of Histophilus somni (strain 129Pt) (Haemophilus somnus).